Consider the following 694-residue polypeptide: Putative bifunctional polynucleotide kinase/RNA ligase (694 aa).

The segment at 1 to 385 (MLHVSRLLAN…TKQALNNKLA (385 aa)) is ligase domain. The interval 394–694 (KQLLVLIGIS…FNVCRDYLEF (301 aa)) is bifunctional 5'-OH polynucleotide kinase/polynucleotide 3'-phosphatase. Residue 401–408 (GISGSGKS) coordinates ATP.

It catalyses the reaction a 5'-end dephospho-2'-deoxyribonucleoside-DNA + ATP = a 5'-end 5'-phospho-2'-deoxyribonucleoside-DNA + ADP + H(+). It carries out the reaction ATP + (ribonucleotide)n-3'-hydroxyl + 5'-phospho-(ribonucleotide)m = (ribonucleotide)n+m + AMP + diphosphate.. Its function is as follows. Trifunctional enzyme that possesses a bifunctional polynucleotide kinase/phosphatase activity and an ATP-dependent RNA ligase activity. May therefore play a role to evade an RNA damage-based host response. This chain is Putative bifunctional polynucleotide kinase/RNA ligase (PNK/PNL), found in Autographa californica nuclear polyhedrosis virus (AcMNPV).